Here is a 332-residue protein sequence, read N- to C-terminus: Phospho-N-acetylmuramoyl-pentapeptide-transferase (332 aa).

A run of 8 helical transmembrane segments spans residues 9 to 29 (IYTI…IIPF), 55 to 75 (TIGG…AGLI), 79 to 99 (LWVA…DDFI), 115 to 135 (MSLQ…ISVM), 155 to 175 (IPQY…VVVA), 196 to 216 (IVAA…LAIF), 253 to 273 (AVAI…IYFA), and 312 to 332 (VVIV…LGLN).

It belongs to the glycosyltransferase 4 family. MraY subfamily. The cofactor is Mg(2+).

It localises to the cell membrane. It carries out the reaction UDP-N-acetyl-alpha-D-muramoyl-L-alanyl-gamma-D-glutamyl-meso-2,6-diaminopimeloyl-D-alanyl-D-alanine + di-trans,octa-cis-undecaprenyl phosphate = di-trans,octa-cis-undecaprenyl diphospho-N-acetyl-alpha-D-muramoyl-L-alanyl-D-glutamyl-meso-2,6-diaminopimeloyl-D-alanyl-D-alanine + UMP. It functions in the pathway cell wall biogenesis; peptidoglycan biosynthesis. Its function is as follows. Catalyzes the initial step of the lipid cycle reactions in the biosynthesis of the cell wall peptidoglycan: transfers peptidoglycan precursor phospho-MurNAc-pentapeptide from UDP-MurNAc-pentapeptide onto the lipid carrier undecaprenyl phosphate, yielding undecaprenyl-pyrophosphoryl-MurNAc-pentapeptide, known as lipid I. This is Phospho-N-acetylmuramoyl-pentapeptide-transferase from Alkaliphilus oremlandii (strain OhILAs) (Clostridium oremlandii (strain OhILAs)).